Consider the following 116-residue polypeptide: Antimicrobial peptide 1b (116 aa).

Positions Met1 to Gly34 are cleaved as a signal peptide. The Chitin-binding type-1 domain occupies Ala35–Gly77. 5 disulfide bridges follow: Cys38/Cys53, Cys47/Cys59, Cys50/Cys78, Cys52/Cys66, and Cys71/Cys75. Positions Asp80–Pro116 are excised as a propeptide. A disordered region spans residues Ala89–Pro116. Positions Ser93 to Arg105 are enriched in low complexity.

Its function is as follows. Binds chitin. Has antifungal activity against the fungi F.solani (IC(50)=5 ug/ml), F.verticillioides (IC(50)=30 ug/ml), F.oxysporum (IC(50)=5 ug/ml), B.sorokiniana (IC(50)=5 ug/ml), B.cinerea (IC(50)=20 ug/ml) and N.crassa (IC(50)=10 ug/ml). Inhibits hyphal elongation and causes browning of hyphae in F.oxysporum. Causes destruction and discoloration of spores in B.sorokiniana. Inhibits the development of disease caused by the fungus P.infestans on potato tubers. Has antibacterial activity against the Gram-negative bacteria P.syringae and E.carotovora, and the Gram-positive bacterium C.michiganensis. Functionally, has antifungal activity against F.verticillioides (IC(50)=2.7 ug/ml). At concentrations between 45 uM and 225 uM, inhibits activity of metalloproteinase fungalysin Fv-cpm from F.verticillioides. The protein is Antimicrobial peptide 1b of Triticum kiharae (Wheat).